The following is a 21-amino-acid chain: Outer membrane protein P2 (21 aa).

Disulfide bond interactions within and between MOMP molecules and other components form high molecular-weight oligomers.

It localises to the cell outer membrane. In terms of biological role, structural rigidity of the outer membrane of elementary bodies and porin forming, permitting diffusion of solutes through the intracellular reticulate body membrane. Binds carcinoembryonic antigen (CEA). This Glaesserella parasuis (Haemophilus parasuis) protein is Outer membrane protein P2.